A 553-amino-acid polypeptide reads, in one-letter code: CTP synthase (553 aa).

The amidoligase domain stretch occupies residues 1–270 (MTKFVFVTGG…DRIICEELRI (270 aa)). CTP is bound at residue Ser-13. Ser-13 provides a ligand contact to UTP. Residues 14–19 (SLGKGI) and Asp-71 contribute to the ATP site. Residues Asp-71 and Glu-144 each coordinate Mg(2+). Residues 151–153 (DIE), 191–196 (KTKPTQ), and Lys-227 each bind CTP. UTP is bound by residues 191–196 (KTKPTQ) and Lys-227. Positions 295-547 (TIGMVGKYVD…VEAALAHQQN (253 aa)) constitute a Glutamine amidotransferase type-1 domain. Residue Gly-356 coordinates L-glutamine. Cys-383 functions as the Nucleophile; for glutamine hydrolysis in the catalytic mechanism. L-glutamine-binding positions include 384–387 (LGMQ), Glu-407, and Arg-473. Active-site residues include His-520 and Glu-522.

The protein belongs to the CTP synthase family. In terms of assembly, homotetramer.

The enzyme catalyses UTP + L-glutamine + ATP + H2O = CTP + L-glutamate + ADP + phosphate + 2 H(+). It carries out the reaction L-glutamine + H2O = L-glutamate + NH4(+). The catalysed reaction is UTP + NH4(+) + ATP = CTP + ADP + phosphate + 2 H(+). It participates in pyrimidine metabolism; CTP biosynthesis via de novo pathway; CTP from UDP: step 2/2. Its activity is regulated as follows. Allosterically activated by GTP, when glutamine is the substrate; GTP has no effect on the reaction when ammonia is the substrate. The allosteric effector GTP functions by stabilizing the protein conformation that binds the tetrahedral intermediate(s) formed during glutamine hydrolysis. Inhibited by the product CTP, via allosteric rather than competitive inhibition. Its function is as follows. Catalyzes the ATP-dependent amination of UTP to CTP with either L-glutamine or ammonia as the source of nitrogen. Regulates intracellular CTP levels through interactions with the four ribonucleotide triphosphates. The polypeptide is CTP synthase (Ralstonia pickettii (strain 12J)).